A 318-amino-acid polypeptide reads, in one-letter code: MKTQFTPKTRKVAVIGTGFVGSSYAFSMVNQGIANELVLIDMNKEKAEGEARDINHGMPFATPMKIWAGDYKDCADADLAVITAGANQAPGETRLDLVEKNVKIFECIVKDIMNSGFDGIILVATNPVDILAHVTQKVSGLPNGRVIGSGTILDTARFRYLLSDYFEVDSRNVHAYIMGEHGDTEFPVWSHAQIGGVKLEHFINTAAIEKEPDMQHLFEQTRDAAYHIINRKGATYYGIAMGLVRITKAILDDENSILTVSALLEGQYGISDVYIGVPAIINKNGVRQIIELNLTPHEQQQLEHSASILKQTRDRAFV.

NAD(+) contacts are provided by residues V20, D41, K46, Y71, and 85–86 (GA). Residues Q88, R94, and 126 to 129 (NPVD) each bind substrate. Residues 124–126 (ATN) and S149 each bind NAD(+). Substrate is bound at residue 154–157 (DTAR). The beta-D-fructose 1,6-bisphosphate site is built by R159 and H174. H181 serves as the catalytic Proton acceptor. Y226 bears the Phosphotyrosine mark. T235 is a substrate binding site.

Belongs to the LDH/MDH superfamily. LDH family. In terms of assembly, homotetramer.

It localises to the cytoplasm. The catalysed reaction is (S)-lactate + NAD(+) = pyruvate + NADH + H(+). Its pathway is fermentation; pyruvate fermentation to lactate; (S)-lactate from pyruvate: step 1/1. Its activity is regulated as follows. Allosterically activated by fructose 1,6-bisphosphate (FBP). Functionally, catalyzes the conversion of lactate to pyruvate. This is L-lactate dehydrogenase from Priestia megaterium (Bacillus megaterium).